Here is a 382-residue protein sequence, read N- to C-terminus: Lipid-A-disaccharide synthase (382 aa).

The protein belongs to the LpxB family.

The catalysed reaction is 2-N,3-O-bis[(3R)-3-hydroxytetradecanoyl]-alpha-D-glucosaminyl 1-phosphate + UDP-2-N,3-O-bis[(3R)-3-hydroxytetradecanoyl]-alpha-D-glucosamine = lipid A disaccharide (E. coli) + UDP + H(+). The enzyme catalyses a lipid X + a UDP-2-N,3-O-bis[(3R)-3-hydroxyacyl]-alpha-D-glucosamine = a lipid A disaccharide + UDP + H(+). It participates in glycolipid biosynthesis; lipid IV(A) biosynthesis; lipid IV(A) from (3R)-3-hydroxytetradecanoyl-[acyl-carrier-protein] and UDP-N-acetyl-alpha-D-glucosamine: step 5/6. Its function is as follows. Condensation of UDP-2,3-diacylglucosamine and 2,3-diacylglucosamine-1-phosphate to form lipid A disaccharide, a precursor of lipid A, a phosphorylated glycolipid that anchors the lipopolysaccharide to the outer membrane of the cell. In Escherichia coli (strain SMS-3-5 / SECEC), this protein is Lipid-A-disaccharide synthase.